A 99-amino-acid polypeptide reads, in one-letter code: Teretoxin Tsu6.4 (99 aa).

Residues 1 to 21 (MRLLLILVLLTPVIVAFSVDE) form the signal peptide. Residues 22-53 (ELNNADGANAASFTADQEVRHKRNLFPAIARR) constitute a propeptide that is removed on maturation.

In terms of processing, contains 3 disulfide bonds. In terms of tissue distribution, expressed by the venom duct.

The protein resides in the secreted. This chain is Teretoxin Tsu6.4, found in Terebra subulata (Chocolate spotted auger).